The sequence spans 219 residues: Trafficking protein particle complex subunit 4 (219 aa).

This sequence belongs to the TRAPP small subunits family. TRAPPC4 subfamily. Component of the multisubunit TRAPP (transport protein particle) complex, which includes at least TRAPPC2, TRAPPC2L, TRAPPC3, TRAPPC3L, TRAPPC4, TRAPPC5, TRAPPC8, TRAPPC9, TRAPPC10, TRAPPC11 and TRAPPC12. Interacts with SDC2. In terms of tissue distribution, widely expressed.

Its subcellular location is the postsynaptic cell membrane. It localises to the golgi apparatus membrane. The protein localises to the endoplasmic reticulum. It is found in the vesicle. Core component of the TRAPP complexes which has a function of guanine nucleotide exchange factor activity for Rab1 GTPase. Plays a role in vesicular transport from endoplasmic reticulum to Golgi and autophagy. May play a role in dendrite postsynaptic membrane trafficking. In Mus musculus (Mouse), this protein is Trafficking protein particle complex subunit 4.